The chain runs to 58 residues: Small ribosomal subunit protein bS21 (58 aa).

Residues 36–58 (EFYEKPSVKRKRKSEAARKRKKF) are disordered. Basic residues predominate over residues 43 to 58 (VKRKRKSEAARKRKKF).

The protein belongs to the bacterial ribosomal protein bS21 family.

The sequence is that of Small ribosomal subunit protein bS21 from Streptococcus uberis (strain ATCC BAA-854 / 0140J).